Consider the following 262-residue polypeptide: Hydroxyethylthiazole kinase (262 aa).

A substrate-binding site is contributed by M50. ATP contacts are provided by R125 and T171. A substrate-binding site is contributed by G198.

It belongs to the Thz kinase family. Mg(2+) serves as cofactor.

It carries out the reaction 5-(2-hydroxyethyl)-4-methylthiazole + ATP = 4-methyl-5-(2-phosphooxyethyl)-thiazole + ADP + H(+). Its pathway is cofactor biosynthesis; thiamine diphosphate biosynthesis; 4-methyl-5-(2-phosphoethyl)-thiazole from 5-(2-hydroxyethyl)-4-methylthiazole: step 1/1. Catalyzes the phosphorylation of the hydroxyl group of 4-methyl-5-beta-hydroxyethylthiazole (THZ). The protein is Hydroxyethylthiazole kinase of Escherichia coli O6:H1 (strain CFT073 / ATCC 700928 / UPEC).